A 601-amino-acid chain; its full sequence is Lanthanide-dependent methanol dehydrogenase (601 aa).

The N-terminal stretch at 1-21 (MRAVHLLALGAGLAAASPALA) is a signal peptide. A disulfide bridge connects residues C124 and C125. Pyrroloquinoline quinone is bound by residues R130, T174, S189, G190, and G191. E192 contributes to the La(3+) binding site. C197 and C256 form a disulfide bridge. A pyrroloquinoline quinone-binding site is contributed by W258. Residues N276, D318, and D320 each contribute to the La(3+) site. D318 acts as the Proton acceptor in catalysis. Pyrroloquinoline quinone is bound at residue R345. Cysteines 408 and 437 form a disulfide. Pyrroloquinoline quinone contacts are provided by W494 and W558.

The protein belongs to the bacterial PQQ dehydrogenase family. As to quaternary structure, homodimer. La(3+) serves as cofactor. Nd(3+) is required as a cofactor. The cofactor is pyrroloquinoline quinone.

The protein localises to the periplasm. It carries out the reaction 2 Fe(III)-[cytochrome cL] + methanol = 2 Fe(II)-[cytochrome cL] + formaldehyde + 2 H(+). Its function is as follows. Catalyzes the oxidation of methanol to formaldehyde, but only in the presence of lanthanides (Ln). Contributes to methanol metabolism when La(3+) is present in the natural environment of the bacterium, allowing bacterial growth with methanol as carbon and energy source. Thereby is an essential enzyme for Ln-dependent methylotrophy. Uses a specific cytochrome cL (XoxG), encoded by the adjacent gene in the locus, as electron acceptor. Also plays a role in the transcriptional regulation of the mxa and xox1 operons, most likely acting as a lanthanide sensory module. Is also able to oxidize formaldehyde to formate in vitro, but this activity does not occur in vivo. The chain is Lanthanide-dependent methanol dehydrogenase from Methylorubrum extorquens (strain ATCC 14718 / DSM 1338 / JCM 2805 / NCIMB 9133 / AM1) (Methylobacterium extorquens).